Reading from the N-terminus, the 42-residue chain is Cytochrome b6-f complex subunit 7 (42 aa).

Residues 19 to 37 (AVVCFSMTLFGLSLGFGLL) traverse the membrane as a helical segment.

It belongs to the PetM family. The 4 large subunits of the cytochrome b6-f complex are cytochrome b6, subunit IV (17 kDa polypeptide, PetD), cytochrome f and the Rieske protein, while the 4 small subunits are PetG, PetL, PetM and PetN. The complex functions as a dimer.

It is found in the plastid. It localises to the chloroplast thylakoid membrane. Component of the cytochrome b6-f complex, which mediates electron transfer between photosystem II (PSII) and photosystem I (PSI), cyclic electron flow around PSI, and state transitions. This is Cytochrome b6-f complex subunit 7 from Phaeodactylum tricornutum (strain CCAP 1055/1).